Reading from the N-terminus, the 87-residue chain is Putative membrane protein insertion efficiency factor (87 aa).

It belongs to the UPF0161 family.

It is found in the cell membrane. In terms of biological role, could be involved in insertion of integral membrane proteins into the membrane. This chain is Putative membrane protein insertion efficiency factor, found in Ligilactobacillus salivarius (strain UCC118) (Lactobacillus salivarius).